A 69-amino-acid chain; its full sequence is Cold shock-like protein CspC (69 aa).

Residues 6–66 form the CSD domain; it reads GQVKWFNESK…GQKGPAAVNV (61 aa).

The protein resides in the cytoplasm. In Escherichia coli O157:H7, this protein is Cold shock-like protein CspC (cspC).